A 337-amino-acid chain; its full sequence is Tetraacyldisaccharide 4'-kinase (337 aa).

An ATP-binding site is contributed by His51 to Thr58.

It belongs to the LpxK family.

It carries out the reaction a lipid A disaccharide + ATP = a lipid IVA + ADP + H(+). Its pathway is glycolipid biosynthesis; lipid IV(A) biosynthesis; lipid IV(A) from (3R)-3-hydroxytetradecanoyl-[acyl-carrier-protein] and UDP-N-acetyl-alpha-D-glucosamine: step 6/6. Functionally, transfers the gamma-phosphate of ATP to the 4'-position of a tetraacyldisaccharide 1-phosphate intermediate (termed DS-1-P) to form tetraacyldisaccharide 1,4'-bis-phosphate (lipid IVA). This is Tetraacyldisaccharide 4'-kinase from Afipia carboxidovorans (strain ATCC 49405 / DSM 1227 / KCTC 32145 / OM5) (Oligotropha carboxidovorans).